Consider the following 678-residue polypeptide: DNA ligase (678 aa).

NAD(+) contacts are provided by residues 34–38, 83–84, and Glu114; these read DSEYD and SL. Lys116 (N6-AMP-lysine intermediate) is an active-site residue. Residues Arg137, Glu176, Lys293, and Lys317 each contribute to the NAD(+) site. The Zn(2+) site is built by Cys411, Cys414, Cys429, and Cys435. Residues 594-678 enclose the BRCT domain; that stretch reads PTRQPLNGES…LMAGYGQTLS (85 aa).

The protein belongs to the NAD-dependent DNA ligase family. LigA subfamily. It depends on Mg(2+) as a cofactor. Mn(2+) serves as cofactor.

The catalysed reaction is NAD(+) + (deoxyribonucleotide)n-3'-hydroxyl + 5'-phospho-(deoxyribonucleotide)m = (deoxyribonucleotide)n+m + AMP + beta-nicotinamide D-nucleotide.. DNA ligase that catalyzes the formation of phosphodiester linkages between 5'-phosphoryl and 3'-hydroxyl groups in double-stranded DNA using NAD as a coenzyme and as the energy source for the reaction. It is essential for DNA replication and repair of damaged DNA. In Acinetobacter baumannii (strain AB307-0294), this protein is DNA ligase.